The following is an 86-amino-acid chain: Small ribosomal subunit protein bS20 (86 aa).

Residues 1-21 are disordered; that stretch reads MANTKSAIKAARKSLRLHDRN.

The protein belongs to the bacterial ribosomal protein bS20 family.

In terms of biological role, binds directly to 16S ribosomal RNA. The protein is Small ribosomal subunit protein bS20 of Opitutus terrae (strain DSM 11246 / JCM 15787 / PB90-1).